The sequence spans 344 residues: Probable dual-specificity RNA methyltransferase RlmN (344 aa).

The Proton acceptor role is filled by Glu-89. The 235-residue stretch at 95–329 folds into the Radical SAM core domain; that stretch reads TDQRLTVCVS…VSLRASRGLD (235 aa). Cys-102 and Cys-334 are joined by a disulfide. Cys-109, Cys-113, and Cys-116 together coordinate [4Fe-4S] cluster. S-adenosyl-L-methionine-binding positions include 156–157, Ser-186, 215–217, and Asn-291; these read GE and SLH. Residue Cys-334 is the S-methylcysteine intermediate of the active site.

It belongs to the radical SAM superfamily. RlmN family. [4Fe-4S] cluster serves as cofactor.

The protein resides in the cytoplasm. The catalysed reaction is adenosine(2503) in 23S rRNA + 2 reduced [2Fe-2S]-[ferredoxin] + 2 S-adenosyl-L-methionine = 2-methyladenosine(2503) in 23S rRNA + 5'-deoxyadenosine + L-methionine + 2 oxidized [2Fe-2S]-[ferredoxin] + S-adenosyl-L-homocysteine. The enzyme catalyses adenosine(37) in tRNA + 2 reduced [2Fe-2S]-[ferredoxin] + 2 S-adenosyl-L-methionine = 2-methyladenosine(37) in tRNA + 5'-deoxyadenosine + L-methionine + 2 oxidized [2Fe-2S]-[ferredoxin] + S-adenosyl-L-homocysteine. In terms of biological role, specifically methylates position 2 of adenine 2503 in 23S rRNA and position 2 of adenine 37 in tRNAs. This chain is Probable dual-specificity RNA methyltransferase RlmN, found in Parasynechococcus marenigrum (strain WH8102).